A 356-amino-acid chain; its full sequence is Tungsten-containing aldehyde ferredoxin oxidoreductase cofactor-modifying protein (356 aa).

Residues 1-214 (MKYLYLEITS…PIVNELYKIA (214 aa)) form the Radical SAM core domain. [4Fe-4S] cluster is bound by residues Cys12, Cys16, and Cys19.

Belongs to the radical SAM superfamily. The cofactor is [4Fe-4S] cluster.

Involved in the biosynthesis of a molybdopterin-based tungsten cofactor. This Pyrococcus furiosus (strain ATCC 43587 / DSM 3638 / JCM 8422 / Vc1) protein is Tungsten-containing aldehyde ferredoxin oxidoreductase cofactor-modifying protein (cmo).